The following is a 68-amino-acid chain: MTKIKLKTKSSVKKRFHLTAKGKVISTQSGKRHGMVKRSKSNIRNQRGTTILNKSDSRIVKLYMPYGI.

The protein belongs to the bacterial ribosomal protein bL35 family.

This Wolbachia pipientis subsp. Culex pipiens (strain wPip) protein is Large ribosomal subunit protein bL35.